A 404-amino-acid polypeptide reads, in one-letter code: RNA exonuclease 3 (404 aa).

Over residues 1 to 17 (MNNNAQNKRSLDDSNGN) the composition is skewed to polar residues. Positions 1–29 (MNNNAQNKRSLDDSNGNDTKRPKQEDPKY) are disordered. Positions 18-28 (DTKRPKQEDPK) are enriched in basic and acidic residues. In terms of domain architecture, Exonuclease spans 241 to 389 (VLGIDCEMGF…EDSIAAIDIV (149 aa)).

This sequence belongs to the REXO1/REXO3 family.

The protein localises to the cytoplasm. It localises to the nucleus. 3' to 5' exoribonuclease required for proper 3' end maturation of MRP RNA and of the U5L snRNA. This Candida albicans (strain SC5314 / ATCC MYA-2876) (Yeast) protein is RNA exonuclease 3 (REX3).